A 586-amino-acid chain; its full sequence is Aspartate--tRNA(Asp/Asn) ligase (586 aa).

Residue E172 participates in L-aspartate binding. The tract at residues 196-199 is aspartate; it reads QLYK. R218 is an L-aspartate binding site. ATP-binding positions include 218–220 and Q227; that span reads RDE. H446 is an L-aspartate binding site. Residue E480 participates in ATP binding. R487 contacts L-aspartate. 532 to 535 lines the ATP pocket; sequence GIDR.

Belongs to the class-II aminoacyl-tRNA synthetase family. Type 1 subfamily. As to quaternary structure, homodimer.

The protein localises to the cytoplasm. The enzyme catalyses tRNA(Asx) + L-aspartate + ATP = L-aspartyl-tRNA(Asx) + AMP + diphosphate. Its function is as follows. Aspartyl-tRNA synthetase with relaxed tRNA specificity since it is able to aspartylate not only its cognate tRNA(Asp) but also tRNA(Asn). Reaction proceeds in two steps: L-aspartate is first activated by ATP to form Asp-AMP and then transferred to the acceptor end of tRNA(Asp/Asn). The chain is Aspartate--tRNA(Asp/Asn) ligase from Borreliella afzelii (strain PKo) (Borrelia afzelii).